The chain runs to 256 residues: Cell division protein DivIB (256 aa).

The Cytoplasmic portion of the chain corresponds to 1–23; that stretch reads MSKDLISTDEYIKIKKKRKRIKK. A helical transmembrane segment spans residues 24 to 44; it reads IVVLFIFLISILVTLCLKIPY. The 69-residue stretch at 45–113 folds into the POTRA domain; it reads FNIESIEIKG…NKLEIYVKER (69 aa). Residues 45–256 are Extracellular-facing; that stretch reads FNIESIEIKG…EGNPVFYIEK (212 aa).

It belongs to the FtsQ/DivIB family. DivIB subfamily.

The protein localises to the cell membrane. Its function is as follows. Cell division protein that may be involved in stabilizing or promoting the assembly of the division complex. The sequence is that of Cell division protein DivIB from Clostridium botulinum (strain Loch Maree / Type A3).